The chain runs to 1886 residues: Polyprotein P3 (1886 aa).

Disordered regions lie at residues 1–24, 420–466, and 478–529; these read MATR…SGVP, RCDS…MQDD, and RMKK…NQPE. Residues 9–20 are compositionally biased toward polar residues; that stretch reads VTQTDGSRTATE. Low complexity predominate over residues 488–498; that stretch reads QQALSSQAQEE. The CCHC-type zinc-finger motif lies at 879–896; it reads CKCYICGQEGHYANQCRN. The Peptidase A2 domain maps to 1215–1292; that stretch reads INAIVDTGAT…GLSPGIQMII (78 aa). The For protease activity role is filled by D1220. One can recognise a Reverse transcriptase domain in the interval 1425 to 1615; it reads LLQMKVIRPS…PEIDFLGASL (191 aa). Positions 1706–1841 constitute an RNase H type-1 domain; it reads KDSFIIIETD…ADALSRMINF (136 aa). Positions 1715, 1758, 1784, and 1833 each coordinate Mg(2+).

In terms of processing, polyprotein P3 is presumably proteolytically cleaved into several chains by viral protease.

The enzyme catalyses Endonucleolytic cleavage to 5'-phosphomonoester.. It catalyses the reaction DNA(n) + a 2'-deoxyribonucleoside 5'-triphosphate = DNA(n+1) + diphosphate. Its function is as follows. Capsid protein self assembles to form a bacilliform capsid about 90-900 nm in length. The capsid encapsulates the genomic dsDNA. Following virus entry into host cell, provides nuclear import of the viral genome. Virus particles do not enter the nucleus, but are targeted to the nuclear membrane through the interaction with host importins. This is Polyprotein P3 from Commelina yellow mottle virus (CoYMV).